The following is a 387-amino-acid chain: Chorismate synthase (387 aa).

Positions 39 and 45 each coordinate NADP(+). FMN contacts are provided by residues 130-132 (RSS), 251-252 (NA), Gly295, 310-314 (KPIPT), and Arg336.

This sequence belongs to the chorismate synthase family. Homotetramer. FMNH2 is required as a cofactor.

The enzyme catalyses 5-O-(1-carboxyvinyl)-3-phosphoshikimate = chorismate + phosphate. The protein operates within metabolic intermediate biosynthesis; chorismate biosynthesis; chorismate from D-erythrose 4-phosphate and phosphoenolpyruvate: step 7/7. Catalyzes the anti-1,4-elimination of the C-3 phosphate and the C-6 proR hydrogen from 5-enolpyruvylshikimate-3-phosphate (EPSP) to yield chorismate, which is the branch point compound that serves as the starting substrate for the three terminal pathways of aromatic amino acid biosynthesis. This reaction introduces a second double bond into the aromatic ring system. This is Chorismate synthase from Exiguobacterium sp. (strain ATCC BAA-1283 / AT1b).